We begin with the raw amino-acid sequence, 159 residues long: Ribosome maturation factor RimM (159 aa).

One can recognise a PRC barrel domain in the interval 86-159 (SDAFHLPKLI…IHIETIEGLI (74 aa)).

It belongs to the RimM family. In terms of assembly, binds ribosomal protein uS19.

The protein localises to the cytoplasm. An accessory protein needed during the final step in the assembly of 30S ribosomal subunit, possibly for assembly of the head region. Essential for efficient processing of 16S rRNA. May be needed both before and after RbfA during the maturation of 16S rRNA. It has affinity for free ribosomal 30S subunits but not for 70S ribosomes. The polypeptide is Ribosome maturation factor RimM (Acholeplasma laidlawii (strain PG-8A)).